Here is a 339-residue protein sequence, read N- to C-terminus: Ketol-acid reductoisomerase (NADP(+)) (339 aa).

Residues 1–182 enclose the KARI N-terminal Rossmann domain; sequence MRVYYDRDAD…GGGRAGIIET (182 aa). Residues 24–27, Arg48, Ser51, and 83–86 contribute to the NADP(+) site; these read YGSQ and DEGQ. His108 is an active-site residue. An NADP(+)-binding site is contributed by Gly134. A KARI C-terminal knotted domain is found at 183 to 328; the sequence is TFKEEVETDL…EKLRAMMPWI (146 aa). Positions 191, 195, 227, and 231 each coordinate Mg(2+). Ser252 contacts substrate.

The protein belongs to the ketol-acid reductoisomerase family. Mg(2+) serves as cofactor.

It carries out the reaction (2R)-2,3-dihydroxy-3-methylbutanoate + NADP(+) = (2S)-2-acetolactate + NADPH + H(+). It catalyses the reaction (2R,3R)-2,3-dihydroxy-3-methylpentanoate + NADP(+) = (S)-2-ethyl-2-hydroxy-3-oxobutanoate + NADPH + H(+). It functions in the pathway amino-acid biosynthesis; L-isoleucine biosynthesis; L-isoleucine from 2-oxobutanoate: step 2/4. Its pathway is amino-acid biosynthesis; L-valine biosynthesis; L-valine from pyruvate: step 2/4. Its function is as follows. Involved in the biosynthesis of branched-chain amino acids (BCAA). Catalyzes an alkyl-migration followed by a ketol-acid reduction of (S)-2-acetolactate (S2AL) to yield (R)-2,3-dihydroxy-isovalerate. In the isomerase reaction, S2AL is rearranged via a Mg-dependent methyl migration to produce 3-hydroxy-3-methyl-2-ketobutyrate (HMKB). In the reductase reaction, this 2-ketoacid undergoes a metal-dependent reduction by NADPH to yield (R)-2,3-dihydroxy-isovalerate. This Gluconobacter oxydans (strain 621H) (Gluconobacter suboxydans) protein is Ketol-acid reductoisomerase (NADP(+)).